The following is a 235-amino-acid chain: TIR domain-containing adapter molecule 2 (235 aa).

The tract at residues 1–39 (MGIGKSKINSCPLSLSWGKRHSVDTSPGYHESDSKKSED) is disordered. The N-myristoyl glycine moiety is linked to residue glycine 2. A Phosphoserine; by PKC/PRKCE modification is found at serine 16. Over residues 30 to 39 (HESDSKKSED) the composition is skewed to basic and acidic residues. The TIR domain occupies 73 to 229 (AEEEVFLKFV…TIWKETRNMV (157 aa)). The residue at position 167 (tyrosine 167) is a Phosphotyrosine.

In terms of assembly, homodimer. Interacts with TLR4, TICAM1, IRF3 and IRF7 in response to LPS. Interacts with IL1R1, IL1RAP, IRAK2, IRAK3 and TRAF6. Interacts with protein kinase-inactive mutants of IRAK1 and IRAK4. Isoform 1 interacts with isoform 2; the interaction occurs in late endosomes and disrupts the interaction between isoform 1 and TICAM1. Interacts with MYD88; the interaction decreases after IL-18 stimulation in a time-dependent manner. Interacts with IL18R1 and IL18RAP. Interacts with TLR2. Interacts with RAB11FIP2. In terms of processing, phosphorylated by PRKCE in response to LPS. Phosphorylation is essential for its function. It is depleted from the membrane upon phosphorylation. Tyrosine phosphorylation is inhibited by phosphatase PTPN4. Post-translationally, isoform 1 is myristoylated. Required for membrane association which is critical for its ability to initiate efficient signaling. In terms of tissue distribution, expressed in spleen, prostate, testis, uterus, small intestine, colon, peripheral blood leukocytes, heart, placenta, lung, liver, skeletal muscle, and pancreas Isoform 2 is ubiquitously expressed (at lower levels than isoform 1).

It is found in the cytoplasm. The protein localises to the golgi apparatus. It localises to the cell membrane. Its subcellular location is the endoplasmic reticulum. The protein resides in the early endosome membrane. It is found in the late endosome membrane. The protein localises to the cell projection. It localises to the phagocytic cup. Functionally, functions as a sorting adapter in different signaling pathways to facilitate downstream signaling leading to type I interferon induction. In TLR4 signaling, physically bridges TLR4 and TICAM1 and functionally transmits signal to TICAM1 in early endosomes after endocytosis of TLR4. In TLR2 signaling, physically bridges TLR2 and MYD88 and is required for the TLR2-dependent movement of MYD88 to endosomes following ligand engagement. Involved in IL-18 signaling and is proposed to function as a sorting adapter for MYD88 in IL-18 signaling during adaptive immune response. Forms a complex with RAB11FIP2 that is recruited to the phagosomes to promote the activation of the actin-regulatory GTPases RAC1 and CDC42 and subsequent phagocytosis of Gram-negative bacteria. Proposed to inhibit LPS-TLR4 signaling at the late endosome by interaction with isoform 1 thereby disrupting the association of isoform 1 with TICAM1. May be involved in TLR4 degradation in late endosomes. The sequence is that of TIR domain-containing adapter molecule 2 (TICAM2) from Homo sapiens (Human).